Consider the following 593-residue polypeptide: Isocitrate dehydrogenase kinase/phosphatase (593 aa).

Residues alanine 324–leucine 330 and lysine 345 each bind ATP. The active site involves aspartate 380.

The protein belongs to the AceK family.

The protein localises to the cytoplasm. It carries out the reaction L-seryl-[isocitrate dehydrogenase] + ATP = O-phospho-L-seryl-[isocitrate dehydrogenase] + ADP + H(+). Functionally, bifunctional enzyme which can phosphorylate or dephosphorylate isocitrate dehydrogenase (IDH) on a specific serine residue. This is a regulatory mechanism which enables bacteria to bypass the Krebs cycle via the glyoxylate shunt in response to the source of carbon. When bacteria are grown on glucose, IDH is fully active and unphosphorylated, but when grown on acetate or ethanol, the activity of IDH declines drastically concomitant with its phosphorylation. This chain is Isocitrate dehydrogenase kinase/phosphatase, found in Dechloromonas aromatica (strain RCB).